We begin with the raw amino-acid sequence, 775 residues long: MAADDKVAILTDDEEEQKRKYVLADPFNGICREPEPPSNETPSSTETSAIPEEEIDWIEKHCVKVNNDLLISKVFYFFFYSAYGSLYPLLPVYYKQLGMSPSQSGLLVGIRYFIEFCSAPFWGVVADRFRKGKIVLLFSLLCWVLFNLGIGFVKPATLRCLPKIPPTAHPTNVSHPVTVLPMNSSTVAFFSTPPKLLQKRDVQLSETEPNISDIDLVSTALTLTSEPTRRPQTEAITHPVTGLILNTSTVTLPPTGNVTRETTIAVVTTTKSLPSDQVTLVYDQQEVEAIFLIILVVVIIGEFFSASSVTIVDTVTLQYLGKHRDRYGLQRMWGSLGWGLAMLSVGIGIDYTHIDVLIDGKGCKPPEYRNYQIVFIVFGVLMTMALIVATQFRFRYNHFNNSDGKGKEVEIPQVERDNSTESSEETPTAATHSQAFNFWDLIKLLCSVQYGSVLFVAWFMGFGYGFVFTFLYWHLEDLNGTTTLFGVCSVLSHVSELTAYFFSHKLIELIGHIRVLYIGLACNTARYIYISYLENAWTVLPMEVLQGVTHAAIWAACISYLSAAVPPELRTSAQGILQGLHLGLGRGCGAMIGGVLVNYFGAAATFRGIGMACLVILLLFALIQWLAVPDEEEDKTMLAERIPVPSSPVPIATIDLVQQQTEDVMPRVEARLPPKKTKHQEEQEDVNKPAWGVSSSPWVTFVYALYQVKELIQLTRESRASEIQPLQVTLCWASVASAPLLPPCSSKHMGNRKTGMLAKDISGLRSLCHSVYQVA.

A Phosphothreonine modification is found at threonine 11. The segment at 28 to 47 (NGICREPEPPSNETPSSTET) is disordered. The segment covering 38–47 (SNETPSSTET) has biased composition (low complexity). 12 consecutive transmembrane segments (helical) span residues 74 to 94 (VFYF…PVYY), 106 to 126 (LLVG…GVVA), 133 to 153 (KIVL…IGFV), 289 to 309 (AIFL…ASSV), 338 to 358 (WGLA…DVLI), 372 to 392 (QIVF…ATQF), 453 to 473 (VLFV…FLYW), 482 to 502 (TTLF…AYFF), 510 to 530 (IGHI…YIYI), 547 to 567 (GVTH…AVPP), 582 to 602 (LGLG…YFGA), and 608 to 628 (GIGM…WLAV).

Belongs to the major facilitator superfamily. MFSD6 family.

It is found in the membrane. Its function is as follows. MHC class I receptor. Binds only to H-2 class I histocompatibility antigen, K-D alpha chain (H-2K(D)). The protein is Major facilitator superfamily domain-containing protein 6 (Mfsd6) of Mus musculus (Mouse).